A 1868-amino-acid polypeptide reads, in one-letter code: Inactive histone-lysine N-methyltransferase 2E (1868 aa).

The HCFC1-binding motif (HBM) signature appears at 63–66 (DHNY). The PHD-type zinc finger occupies 118 to 166 (VTRCICGFTHDDGYMICCDKCSVWQHIDCMGIDRQHIPDTYLCERCQPR). Residues C121, C123, C135, C138, H143, C146, C160, and C163 each coordinate Zn(2+). 3 disordered regions span residues 178-197 (RRKR…SGDE), 217-268 (ASRV…SSDS), and 308-329 (GSGN…SLFR). In terms of domain architecture, SET spans 330-447 (PPVESHIQKN…KGTEITIAFD (118 aa)). The O-linked (GlcNAc) serine glycan is linked to S435. An O-linked (GlcNAc) threonine glycan is attached at T440. The segment at 472–504 (KRSSESTENINSGYETRRKKGKKEKDTSKEKDI) is disordered. Positions 494 to 504 (KEKDTSKEKDI) are enriched in basic and acidic residues. The stretch at 559–613 (VEMESEEQIAERKRKMTREERKMEAILQAFARLEKREKRREQALERISTAKTEVK) forms a coiled coil. The segment covering 646-670 (NRTKQRKSFSRSRTHIGQQRRRHRT) has biased composition (basic residues). The segment at 646-682 (NRTKQRKSFSRSRTHIGQQRRRHRTVSMCSDIPPSSP) is disordered. Phosphoserine is present on residues S837 and S845. A compositionally biased stretch (low complexity) spans 884–908 (YSESSTPTPSPYATPTHTDITPTDP). 2 disordered regions span residues 884–924 (YSES…ETYR) and 1038–1068 (SMET…SSWV). Residues 1049–1068 (PSNQLDSTHSGRGTMYSSWV) show a composition bias toward polar residues. S1070 is modified (phosphoserine). Disordered regions lie at residues 1165–1222 (KRQR…PPPA), 1236–1315 (SSEE…SNHI), 1334–1565 (PDAE…QNQQ), and 1585–1842 (VFTS…QASP). Residues 1184–1197 (SVSPHPSGSLSSSG) are compositionally biased toward low complexity. Polar residues predominate over residues 1203-1213 (SSENGEQAENQ). S1282 carries the phosphoserine modification. Residues 1282–1291 (SDHRKDKDSG) show a composition bias toward basic and acidic residues. Composition is skewed to low complexity over residues 1294-1312 (SPCV…SSHS) and 1348-1363 (PSPD…SKPG). Residue S1364 is modified to Phosphoserine. Polar residues-rich tracts occupy residues 1389 to 1421 (ATVS…QNHA), 1451 to 1463 (HTEN…TPHT), and 1488 to 1498 (SQSPQVGTPQR). Residues 1506–1518 (AAAQNLQANPQQA) are compositionally biased toward low complexity. The span at 1519 to 1547 (TSGALFTQTPSGQSSATYSQFNQQSLNST) shows a compositional bias: polar residues. Positions 1548 to 1558 (APPPPPPPPPS) are enriched in pro residues. Over residues 1585-1603 (VFTSGPNQALPGSTSQQSV) the composition is skewed to polar residues. Residues 1631–1642 (VPPPPPPPPAPG) show a composition bias toward pro residues. Polar residues predominate over residues 1647 to 1656 (QQPSSHQQHS). Positions 1682–1692 (LPPPPPPPGPA) are enriched in pro residues. The span at 1706–1716 (QSLQAQHQHVV) shows a compositional bias: polar residues. The segment covering 1719 to 1732 (APPPPPPPPPPPPA) has biased composition (pro residues). A compositionally biased stretch (polar residues) spans 1806 to 1816 (QGPNSIPTPTA).

Belongs to the class V-like SAM-binding methyltransferase superfamily. Histone-lysine methyltransferase family. TRX/MLL subfamily. In terms of assembly, component of a complex composed of KMT2E, OGT and USP7; the complex stabilizes KMT2E, preventing KMT2E ubiquitination and proteasomal-mediated degradation. Interacts (via N-terminus) with OGT (via TRP repeats). Interacts with deubiquitinating enzyme USP7 (via MATH domain). Interacts (via HBM motif) with HCFC1 (via Kelch domain). Interacts with E2F1; the interaction is probably indirect and is mediated via HCFC1. Post-translationally, ubiquitinated. Deubiquitinated by USP7. O-glycosylated at Ser-435 and Thr-440 in the SET domain by OGT which probably prevents KMT2E proteasomal-mediated degradation.

Its subcellular location is the chromosome. The protein resides in the cytoplasm. The protein localises to the cytoskeleton. It localises to the microtubule organizing center. It is found in the centrosome. Its subcellular location is the nucleus speckle. In terms of biological role, associates with chromatin regions downstream of transcriptional start sites of active genes and thus regulates gene transcription. Chromatin interaction is mediated via the binding to tri-methylated histone H3 at 'Lys-4' (H3K4me3). Key regulator of hematopoiesis involved in terminal myeloid differentiation and in the regulation of hematopoietic stem cell (HSCs) self-renewal by a mechanism that involves DNA methylation. Also acts as an important cell cycle regulator, participating in cell cycle regulatory network machinery at multiple cell cycle stages including G1/S transition, S phase progression and mitotic entry. Recruited to E2F1 responsive promoters by HCFC1 where it stimulates tri-methylation of histone H3 at 'Lys-4' and transcriptional activation and thereby facilitates G1 to S phase transition. During myoblast differentiation, required to suppress inappropriate expression of S-phase-promoting genes and maintain expression of determination genes in quiescent cells. The sequence is that of Inactive histone-lysine N-methyltransferase 2E (Kmt2e) from Mus musculus (Mouse).